Consider the following 448-residue polypeptide: MGKFLQLLSHPTELKAVIQLFGFRQPLHPGKRDVNDKELGRCYELLNLTSRSFAAVIEELHPELRDAVMIFYLVLRALDTIEDDMTIKSSIKIPLLREFDTKLNTKNWTFDGYGPNEKDRTVLVEFDKILNVYHRLKPQYQDIIKSITFKMGNGMADYILDEEFNVYGVATVEDYNLYCHYVAGLVGEGLTNLFVLANFGDKTLTENNFAKADSMGLFLQKTNIIRDYHEDLQDGRSFWPREIWSKYTENLQDFHKVKTPAKEFAGVSCINELVLNALGHVTDCLDYLSLVKDPSSFSFCAIPQVMAVATLAEVYNNPKVLHGVVKIRKGTTCRLILESRTLPGVVKIFKEYIQVINHKSSVRDPNYLKIGIKCGEIEQYCEMIYPNKQALPPSMKSLPENKFTKIVASRESIDLSVQRRIEPGNFNCNVVLFGIGALILSLIYFVLY.

Residues 420 to 440 traverse the membrane as a helical segment; it reads RIEPGNFNCNVVLFGIGALIL.

The protein belongs to the phytoene/squalene synthase family. Requires Mg(2+) as cofactor.

It is found in the endoplasmic reticulum membrane. Its subcellular location is the microsome. It carries out the reaction 2 (2E,6E)-farnesyl diphosphate + NADPH + H(+) = squalene + 2 diphosphate + NADP(+). The catalysed reaction is 2 (2E,6E)-farnesyl diphosphate + NADH + H(+) = squalene + 2 diphosphate + NAD(+). Its pathway is terpene metabolism; lanosterol biosynthesis; lanosterol from farnesyl diphosphate: step 1/3. Squalene synthase; part of the third module of ergosterol biosynthesis pathway that includes the late steps of the pathway. ERG9 produces squalene from 2 farnesyl pyrophosphate moieties. The third module or late pathway involves the ergosterol synthesis itself through consecutive reactions that mainly occur in the endoplasmic reticulum (ER) membrane. Firstly, the squalene synthase ERG9 catalyzes the condensation of 2 farnesyl pyrophosphate moieties to form squalene, which is the precursor of all steroids. Squalene synthase is crucial for balancing the incorporation of farnesyl diphosphate (FPP) into sterol and nonsterol isoprene synthesis. Secondly, the squalene epoxidase ERG1 catalyzes the stereospecific oxidation of squalene to (S)-2,3-epoxysqualene, which is considered to be a rate-limiting enzyme in steroid biosynthesis. Then, the lanosterol synthase ERG7 catalyzes the cyclization of (S)-2,3 oxidosqualene to lanosterol, a reaction that forms the sterol core. In the next steps, lanosterol is transformed to zymosterol through a complex process involving various demethylation, reduction and desaturation reactions. The lanosterol 14-alpha-demethylase ERG11 (also known as CYP51) catalyzes C14-demethylation of lanosterol to produce 4,4'-dimethyl cholesta-8,14,24-triene-3-beta-ol, which is critical for ergosterol biosynthesis. The C-14 reductase ERG24 reduces the C14=C15 double bond of 4,4-dimethyl-cholesta-8,14,24-trienol to produce 4,4-dimethyl-cholesta-8,24-dienol. 4,4-dimethyl-cholesta-8,24-dienol is substrate of the C-4 demethylation complex ERG25-ERG26-ERG27 in which ERG25 catalyzes the three-step monooxygenation required for the demethylation of 4,4-dimethyl and 4alpha-methylsterols, ERG26 catalyzes the oxidative decarboxylation that results in a reduction of the 3-beta-hydroxy group at the C-3 carbon to an oxo group, and ERG27 is responsible for the reduction of the keto group on the C-3. ERG28 has a role as a scaffold to help anchor ERG25, ERG26 and ERG27 to the endoplasmic reticulum and ERG29 regulates the activity of the iron-containing C4-methylsterol oxidase ERG25. Then, the sterol 24-C-methyltransferase ERG6 catalyzes the methyl transfer from S-adenosyl-methionine to the C-24 of zymosterol to form fecosterol. The C-8 sterol isomerase ERG2 catalyzes the reaction which results in unsaturation at C-7 in the B ring of sterols and thus converts fecosterol to episterol. The sterol-C5-desaturase ERG3 then catalyzes the introduction of a C-5 double bond in the B ring to produce 5-dehydroepisterol. The C-22 sterol desaturase ERG5 further converts 5-dehydroepisterol into ergosta-5,7,22,24(28)-tetraen-3beta-ol by forming the C-22(23) double bond in the sterol side chain. Finally, ergosta-5,7,22,24(28)-tetraen-3beta-ol is substrate of the C-24(28) sterol reductase ERG4 to produce ergosterol. The polypeptide is Squalene synthase ERG9 (Candida albicans (Yeast)).